The sequence spans 246 residues: tRNA (guanine-N(7)-)-methyltransferase (246 aa).

Positions 77, 102, 129, and 152 each coordinate S-adenosyl-L-methionine. Asp152 is a catalytic residue. Residues Lys156, Asp188, and 225 to 228 each bind substrate; that span reads TKFE.

The protein belongs to the class I-like SAM-binding methyltransferase superfamily. TrmB family.

It catalyses the reaction guanosine(46) in tRNA + S-adenosyl-L-methionine = N(7)-methylguanosine(46) in tRNA + S-adenosyl-L-homocysteine. The protein operates within tRNA modification; N(7)-methylguanine-tRNA biosynthesis. Catalyzes the formation of N(7)-methylguanine at position 46 (m7G46) in tRNA. The chain is tRNA (guanine-N(7)-)-methyltransferase from Haemophilus influenzae (strain ATCC 51907 / DSM 11121 / KW20 / Rd).